A 256-amino-acid polypeptide reads, in one-letter code: uncharacterized protein (256 aa).

Transmembrane regions (helical) follow at residues 155-175 (ITGM…GLWL) and 203-223 (ITTT…YLLI).

It localises to the cell membrane. This is an uncharacterized protein from Mycobacterium bovis (strain ATCC BAA-935 / AF2122/97).